The chain runs to 580 residues: Acyl-coenzyme A synthetase ACSM4, mitochondrial (580 aa).

The transit peptide at 1 to 22 (MKVLLRCQRLRFIWLAKPAGRH) directs the protein to the mitochondrion. ATP contacts are provided by residues 229-237 (TSGTTGSPK), 368-373 (EGYGQT), Asp455, Arg470, and Lys566.

The protein belongs to the ATP-dependent AMP-binding enzyme family. The cofactor is Mg(2+). It depends on Mn(2+) as a cofactor. In terms of tissue distribution, detected in adult olfactory epithelium.

It is found in the mitochondrion. The enzyme catalyses a medium-chain fatty acid + ATP + CoA = a medium-chain fatty acyl-CoA + AMP + diphosphate. It carries out the reaction hexanoate + ATP + CoA = hexanoyl-CoA + AMP + diphosphate. The catalysed reaction is octanoate + ATP + CoA = octanoyl-CoA + AMP + diphosphate. It catalyses the reaction decanoate + ATP + CoA = decanoyl-CoA + AMP + diphosphate. The enzyme catalyses dodecanoate + ATP + CoA = dodecanoyl-CoA + AMP + diphosphate. Catalyzes the activation of fatty acids by CoA to produce an acyl-CoA, the first step in fatty acid metabolism. Capable of activating medium-chain fatty acids with a preference for C6-12 fatty acids. This is Acyl-coenzyme A synthetase ACSM4, mitochondrial (Acsm4) from Rattus norvegicus (Rat).